The primary structure comprises 392 residues: Ribosomal RNA large subunit methyltransferase G (392 aa).

The protein belongs to the methyltransferase superfamily. RlmG family.

It localises to the cytoplasm. The enzyme catalyses guanosine(1835) in 23S rRNA + S-adenosyl-L-methionine = N(2)-methylguanosine(1835) in 23S rRNA + S-adenosyl-L-homocysteine + H(+). Functionally, specifically methylates the guanine in position 1835 (m2G1835) of 23S rRNA. This Shewanella frigidimarina (strain NCIMB 400) protein is Ribosomal RNA large subunit methyltransferase G.